The primary structure comprises 403 residues: GPI mannosyltransferase 1 (403 aa).

Residues 1–4 (MTGE) lie on the Cytoplasmic side of the membrane. A helical transmembrane segment spans residues 5–25 (EWGLTVLSFLVRVGFFLFGIY). The Lumenal segment spans residues 26–78 (QDANFKVRYTDIDYFVFHDAAKYVYEGKSPYARDTYRYTPLLSWLLVPNHYFG). A helical transmembrane segment spans residues 79-99 (WFHLGKVIFVIFDLVTGLIIM). Over 100–110 (KLLNQAISRKR) the chain is Cytoplasmic. A helical membrane pass occupies residues 111 to 131 (ALILESIWLLNPMVITISTRG). Position 132 (asparagine 132) is a topological domain, lumenal. A helical transmembrane segment spans residues 133–149 (AESVLCCLIMFTLFFLQ). The Cytoplasmic segment spans residues 150–160 (KSRYTLAGILY). Residues 161–181 (GLSIHFKIYPIIYCIPIAIFI) form a helical membrane-spanning segment. Over 182–193 (YYNKRNQGPRTQ) the chain is Lumenal. Residues 194–214 (LTSLLNIGLSTLTTLLGCGWA) traverse the membrane as a helical segment. Over 215 to 266 (MYKIYGYEFLDQAYLYHLYRTDHRHNFSVWNMLLYLDSANKENGESNLSRYA) the chain is Cytoplasmic. The helical transmembrane segment at 267–287 (FVPQLLLVLVTGCLEWWNPTF) threads the bilayer. Residues 288–310 (DNLLRVLFVQTFAFVTYNKVCTS) are Lumenal-facing. Residues 311 to 331 (QYFVWYLIFLPFYLSRTHIGW) form a helical membrane-spanning segment. The Cytoplasmic portion of the chain corresponds to 332–334 (KKG). The helical transmembrane segment at 335–355 (LLMATLWVGTQGIWLSQGYYL) threads the bilayer. Residues 356-361 (EFEGKN) are Lumenal-facing. A helical membrane pass occupies residues 362–382 (VFYPGLFIASVLFFVTNVWLL). Residues 383-403 (GQFITDIKIPTQPTVSNKKNN) lie on the Cytoplasmic side of the membrane.

Belongs to the PIGM family.

It localises to the endoplasmic reticulum membrane. It functions in the pathway glycolipid biosynthesis; glycosylphosphatidylinositol-anchor biosynthesis. Mannosyltransferase involved in glycosylphosphatidylinositol-anchor biosynthesis. Transfers the first alpha-1,4-mannose to GlcN-acyl-PI during GPI precursor assembly. Required for cell wall integrity. The polypeptide is GPI mannosyltransferase 1 (GPI14) (Saccharomyces cerevisiae (strain ATCC 204508 / S288c) (Baker's yeast)).